A 524-amino-acid chain; its full sequence is MSSGYKPGKKRIIQPIQPIKKELIDFHGCQIPKECEPYLERTNVSLIIKKGFINGMKNDAEMFCNEDLFELLMNELLNEQPGASFSSCVRQTANVATLPGVIKSLAMPDAHSGYGFSIGGVAAMRLDDPNAVICPGGVGFDINCGVRLLRTNLDDKDIEPHLAELADALQKNIPSGVGTTSTQTLTEKEMNEIMNEGLEWLVKKGLAWKEDLVYCEENGRIINSDPHLVSQKARGRGRNQLGTLGSGNHYLEIQRVDEIMDKEAAKQMGISHIGQICIMIHCGSRGLGHQVCQDFVDMCVSQSNKNEVDIQLTGVPFQSDNGQKYFKAMNAAANYAFANRGMISYHVRCTFEQVFQKSPKDLDMHLVYDVCHNIAKEESHLVDGKEIKCIVHRKGATRAFAPLNPVIPDAYKPIGQPAIIGGSMGTCSYMLVGTQEGMKKSFGSTCHGAGRKISRVNAMKNISSDSVVEEMKKKGIELRITDPKLAAEEADDAYKDVKEVVETCQSAGISRIVFKLKPLIVVKG.

Mn(2+) contacts are provided by Asp141, Cys144, His249, His281, and His372. A GMP-binding site is contributed by 248–252; that stretch reads NHYLE. GMP-binding positions include 372-373, 421-424, Ser428, 447-450, and Lys523; these read HN, GGSM, and HGAG. His447 serves as the catalytic GMP-histidine intermediate.

It belongs to the RtcB family. In terms of assembly, catalytic component of the tRNA-splicing ligase complex. Requires Mn(2+) as cofactor.

It carries out the reaction a 3'-end 3'-phospho-ribonucleotide-RNA + a 5'-end dephospho-ribonucleoside-RNA + GTP = a ribonucleotidyl-ribonucleotide-RNA + GMP + diphosphate. It catalyses the reaction a 3'-end 2',3'-cyclophospho-ribonucleotide-RNA + a 5'-end dephospho-ribonucleoside-RNA + GTP + H2O = a ribonucleotidyl-ribonucleotide-RNA + GMP + diphosphate + H(+). Catalytic subunit of the tRNA-splicing ligase complex that acts by directly joining spliced tRNA halves to mature-sized tRNAs by incorporating the precursor-derived splice junction phosphate into the mature tRNA as a canonical 3',5'-phosphodiester. May act as an RNA ligase with broad substrate specificity, and may function toward other RNAs. The sequence is that of RNA-splicing ligase RtcB homolog 1 from Entamoeba histolytica (strain ATCC 30459 / HM-1:IMSS / ABRM).